The sequence spans 303 residues: 2-dehydropantoate 2-reductase (303 aa).

Residues 7 to 12 (GAGSLG), R35, N103, A129, and R131 each bind NADP(+). Position 103 (N103) interacts with substrate. Catalysis depends on K182, which acts as the Proton donor. Substrate is bound by residues N186, N190, N200, and S250. E262 contributes to the NADP(+) binding site.

Belongs to the ketopantoate reductase family.

The protein resides in the cytoplasm. The catalysed reaction is (R)-pantoate + NADP(+) = 2-dehydropantoate + NADPH + H(+). It functions in the pathway cofactor biosynthesis; (R)-pantothenate biosynthesis; (R)-pantoate from 3-methyl-2-oxobutanoate: step 2/2. Catalyzes the NADPH-dependent reduction of ketopantoate into pantoic acid. The sequence is that of 2-dehydropantoate 2-reductase (panE) from Pseudomonas aeruginosa (strain ATCC 15692 / DSM 22644 / CIP 104116 / JCM 14847 / LMG 12228 / 1C / PRS 101 / PAO1).